We begin with the raw amino-acid sequence, 353 residues long: DNA integrity scanning protein DisA (353 aa).

Residues 6 to 144 form the DAC domain; the sequence is DKELMNILKI…GGIKYVLRDS (139 aa). ATP-binding positions include G73, L91, and 104-108; that span reads TRHRT.

The protein belongs to the DisA family. As to quaternary structure, homooctamer. The cofactor is Mg(2+).

It catalyses the reaction 2 ATP = 3',3'-c-di-AMP + 2 diphosphate. Functionally, participates in a DNA-damage check-point that is active prior to asymmetric division when DNA is damaged. DisA forms globular foci that rapidly scan along the chromosomes during sporulation, searching for lesions. When a lesion is present, DisA pauses at the lesion site. This triggers a cellular response that culminates in a temporary block in sporulation initiation. In terms of biological role, also has diadenylate cyclase activity, catalyzing the condensation of 2 ATP molecules into cyclic di-AMP (c-di-AMP). c-di-AMP acts as a signaling molecule that couples DNA integrity with progression of sporulation. The rise in c-di-AMP level generated by DisA while scanning the chromosome, operates as a positive signal that advances sporulation; upon encountering a lesion, the DisA focus arrests at the damaged site and halts c-di-AMP synthesis. The protein is DNA integrity scanning protein DisA of Clostridium botulinum (strain Okra / Type B1).